Here is a 234-residue protein sequence, read N- to C-terminus: Response regulator RppA (234 aa).

A Response regulatory domain is found at 2–118; the sequence is RILLVEDETD…ELLARLRALQ (117 aa). D53 is modified (4-aspartylphosphate). The segment at residues 126-232 is a DNA-binding region (ompR/PhoB-type); the sequence is PQILTLGNFS…VPGQGYRFTL (107 aa).

In terms of assembly, interacts with histidine kinase Hik2; may accept phosphate from Hik2.

Member of two-component regulatory system RppA/RppB, involved in the establishment of the appropriate stoichiometry between the 2 photosystems. It senses changes in the plastoquinone (PQ) redox poise. Another group shows this two-component pair, renamed NrsR/NrsS, controls the nickel-dependent expression of the nrsBACD operon; they suggest the photosystem-related activities seen earlier are due to the expression of NrsS (RppB) in the absence of its natural substrate NrsR (RppA). May accept phosphate from Hik2 in a possible Hik2/RppA two-component system. This is Response regulator RppA from Synechocystis sp. (strain ATCC 27184 / PCC 6803 / Kazusa).